Reading from the N-terminus, the 553-residue chain is Adenine deaminase (553 aa).

Belongs to the metallo-dependent hydrolases superfamily. Adenine deaminase family. The cofactor is Mn(2+).

The catalysed reaction is adenine + H2O + H(+) = hypoxanthine + NH4(+). This chain is Adenine deaminase, found in Methanosarcina acetivorans (strain ATCC 35395 / DSM 2834 / JCM 12185 / C2A).